Here is a 136-residue protein sequence, read N- to C-terminus: Cancer/testis antigen 62 (136 aa).

Residues Met-1–Tyr-22 form a disordered region.

Testis specific. Expressed in cancer cell lines.

This chain is Cancer/testis antigen 62 (CT62), found in Homo sapiens (Human).